Here is a 398-residue protein sequence, read N- to C-terminus: S-adenosylmethionine synthase (398 aa).

Position 16 (His-16) interacts with ATP. Asp-18 provides a ligand contact to Mg(2+). Residue Glu-51 participates in K(+) binding. L-methionine is bound by residues Glu-64 and Gln-108. The segment at Gln-108–Ala-118 is flexible loop. Residues Asp-176–Lys-178, Lys-242–Phe-243, Asp-251, Arg-257–Lys-258, Ala-274, and Lys-278 contribute to the ATP site. Asp-251 is an L-methionine binding site. An L-methionine-binding site is contributed by Lys-282.

This sequence belongs to the AdoMet synthase family. In terms of assembly, homotetramer; dimer of dimers. It depends on Mg(2+) as a cofactor. K(+) serves as cofactor.

The protein localises to the cytoplasm. The enzyme catalyses L-methionine + ATP + H2O = S-adenosyl-L-methionine + phosphate + diphosphate. The protein operates within amino-acid biosynthesis; S-adenosyl-L-methionine biosynthesis; S-adenosyl-L-methionine from L-methionine: step 1/1. In terms of biological role, catalyzes the formation of S-adenosylmethionine (AdoMet) from methionine and ATP. The overall synthetic reaction is composed of two sequential steps, AdoMet formation and the subsequent tripolyphosphate hydrolysis which occurs prior to release of AdoMet from the enzyme. The polypeptide is S-adenosylmethionine synthase (Rhodopseudomonas palustris (strain BisB5)).